A 495-amino-acid polypeptide reads, in one-letter code: Myocyte-specific enhancer factor 2A (495 aa).

The 55-residue stretch at 3-57 (RKKIQITRIMDERNRQVTFTKRKFGLMKKAYELSVLCDCEIALIIFNSSNKLFQY) folds into the MADS-box domain. Positions 58-86 (ASTDMDKVLLKYTEYNEPHESRTNSDIVE) form a DNA-binding region, mef2-type. Phosphoserine; by CK2 is present on serine 59. Position 98 is a phosphoserine (serine 98). Residues 175-225 (AESSMLSPPPATLHRNVSPGAPQRPPSTGSAGGMLSTTDLTVPNGAGNGPV) form a disordered region. Serine 235 is modified (phosphoserine). The interval 242-271 (TGANSVGKVMPTKSPPPPGGGSVGMNSRKP) is disordered. N6-acetyllysine is present on lysine 249. Phosphoserine is present on serine 255. Residues 266 to 283 (MNSRKPDLRVVIPPSSKG) form a required for interaction with MAPKs region. Phosphothreonine; by MAPK7 and MAPK14 is present on residues threonine 304 and threonine 311. Serine 347 is modified (phosphoserine; by MAPK7). A compositionally biased stretch (polar residues) spans 382 to 394 (SNLSINTNQNINI). The tract at residues 382–495 (SNLSINTNQN…KRMRMDTWVT (114 aa)) is disordered. The residue at position 395 (lysine 395) is an N6-acetyllysine; alternate. A Glycyl lysine isopeptide (Lys-Gly) (interchain with G-Cter in SUMO); alternate cross-link involves residue lysine 395. Serine 400 is subject to Phosphoserine; by CDK5. Threonine 407 bears the Phosphothreonine mark. Residues 421–433 (QQPPPQPPQPQPQ) are compositionally biased toward pro residues. Phosphoserine is present on serine 441. Low complexity predominate over residues 441-454 (SPVDSLSSSSSSYD). Composition is skewed to basic and acidic residues over residues 455–465 (GSDREDPRGDF) and 476–495 (NAED…TWVT).

As to quaternary structure, binds DNA as a homo- or heterodimer. Dimerizes with MEF2D. Interacts with HDAC7. Interacts with PIAS1; the interaction enhances sumoylation. Interacts with HDAC4, HDAC9 and SLC2A4RG. Interacts (via the N-terminal) with MAPK7; the interaction results in the phosphorylation and transcriptional activity of MEF2A. Constitutive phosphorylation on Ser-400 promotes Lys-395 sumoylation thus preventing acetylation at this site. Dephosphorylation on Ser-400 by PPP3CA upon neuron depolarization promotes a switch from sumoylation to acetylation on residue Lys-395 leading to inhibition of dendrite claw differentiation. Phosphorylation on Thr-304 and Thr-311 are the main sites involved in p38 MAPK signaling and activate transcription. Phosphorylated on these sites by MAPK14/p38alpha and MAPK11/p38beta, but not by MAPK13/p38delta nor by MAPK12/p38gamma. Phosphorylation on Ser-400 by CDK5 induced by neurotoxicity inhibits MEF2A transcriptional activation leading to apoptosis of cortical neurons. Phosphorylation on Thr-304, Thr-311 and Ser-347 can be induced by EGF. Post-translationally, sumoylation on Lys-395 is enhanced by PIAS1 and represses transcriptional activity. Phosphorylation on Ser-400 is required for sumoylation. Has no effect on nuclear location nor on DNA binding. Sumoylated with SUMO1 and, to a lesser extent with SUMO2 and SUMO3. PIASx facilitates sumoylation in postsynaptic dendrites in the cerebellar cortex and promotes their morphogenesis. In terms of processing, acetylation on Lys-395 activates transcriptional activity. Acetylated by p300 on several sites in diffentiating myocytes. Acetylation on Lys-4 increases DNA binding and transactivation. Hyperacetylation by p300 leads to enhanced cardiac myocyte growth and heart failure. Proteolytically cleaved in cerebellar granule neurons on several sites by caspase 3 and caspase 7 following neurotoxicity. Preferentially cleaves the CDK5-mediated hyperphosphorylated form which leads to neuron apoptosis and transcriptional inactivation.

The protein resides in the nucleus. Its function is as follows. Transcriptional activator which binds specifically to the MEF2 element, 5'-YTA[AT](4)TAR-3', found in numerous muscle-specific genes. Also involved in the activation of numerous growth factor- and stress-induced genes. Mediates cellular functions not only in skeletal and cardiac muscle development, but also in neuronal differentiation and survival. Plays diverse roles in the control of cell growth, survival and apoptosis via p38 MAPK signaling in muscle-specific and/or growth factor-related transcription. In cerebellar granule neurons, phosphorylated and sumoylated MEF2A represses transcription of NUR77 promoting synaptic differentiation. Associates with chromatin to the ZNF16 promoter. This chain is Myocyte-specific enhancer factor 2A (Mef2a), found in Rattus norvegicus (Rat).